The sequence spans 110 residues: MYKKGTILVLAYLLIATAVCQLSYKEGHCPLRNSVSKCIPRCVSDYQCSFNEKCCPNKCGSESCVQASPINTGNGYKGSNDDVYCAGVKCGPYEKCQFDRKTKREKCVRT.

A signal peptide spans 1-20 (MYKKGTILVLAYLLIATAVC). The 47-residue stretch at 22 to 68 (LSYKEGHCPLRNSVSKCIPRCVSDYQCSFNEKCCPNKCGSESCVQAS) folds into the WAP domain. 4 disulfides stabilise this stretch: Cys29/Cys55, Cys38/Cys59, Cys42/Cys54, and Cys48/Cys64.

The protein belongs to the venom waprin family. Cys-rich waprin subfamily. In terms of tissue distribution, expressed by the venom gland.

It is found in the secreted. In terms of biological role, antimicrobial peptides with activity against Gram-positive and Gram-negative bacteria as well as fungi. Recognizes carbohydrates in the microbial cell walls, and induces structural damage to them. Also inhibits microbial serine proteases subtilisin A and proteinase K, as well as human and porcine elastases. Carbohydrates that are recognized are LPS, mannan, peptidoglycan, and N-acetl-D-glucosamine. The polypeptide is Waprin-Thr1 (Apis mellifera (Honeybee)).